Consider the following 321-residue polypeptide: Lipoyl synthase (321 aa).

7 residues coordinate [4Fe-4S] cluster: cysteine 68, cysteine 73, cysteine 79, cysteine 94, cysteine 98, cysteine 101, and serine 308. Residues 80–297 form the Radical SAM core domain; that stretch reads FNHGTATFMI…KEIALELGFT (218 aa).

It belongs to the radical SAM superfamily. Lipoyl synthase family. [4Fe-4S] cluster is required as a cofactor.

Its subcellular location is the cytoplasm. The catalysed reaction is [[Fe-S] cluster scaffold protein carrying a second [4Fe-4S](2+) cluster] + N(6)-octanoyl-L-lysyl-[protein] + 2 oxidized [2Fe-2S]-[ferredoxin] + 2 S-adenosyl-L-methionine + 4 H(+) = [[Fe-S] cluster scaffold protein] + N(6)-[(R)-dihydrolipoyl]-L-lysyl-[protein] + 4 Fe(3+) + 2 hydrogen sulfide + 2 5'-deoxyadenosine + 2 L-methionine + 2 reduced [2Fe-2S]-[ferredoxin]. It participates in protein modification; protein lipoylation via endogenous pathway; protein N(6)-(lipoyl)lysine from octanoyl-[acyl-carrier-protein]: step 2/2. Catalyzes the radical-mediated insertion of two sulfur atoms into the C-6 and C-8 positions of the octanoyl moiety bound to the lipoyl domains of lipoate-dependent enzymes, thereby converting the octanoylated domains into lipoylated derivatives. The polypeptide is Lipoyl synthase (Aliivibrio fischeri (strain MJ11) (Vibrio fischeri)).